The sequence spans 681 residues: U3 small nucleolar ribonucleoprotein protein MPP10 (681 aa).

Phosphoserine is present on residues Ser-61, Ser-120, and Ser-139. Acidic residues predominate over residues 105 to 147 (SLLPESEEQEREEDGSEIEADDKEDLEDLEEEEVSDMGNDDPE). Disordered stretches follow at residues 105 to 202 (SLLP…IVDD) and 216 to 364 (NIEK…EKRQ). Residues 109–138 (ESEEQEREEDGSEIEADDKEDLEDLEEEEV) are a coiled coil. The segment covering 148–162 (MGERAENSSKSDLRK) has biased composition (basic and acidic residues). A phosphoserine mark is found at Ser-163, Ser-167, and Ser-171. Residues 180-190 (LEQQSKVQNKG) are compositionally biased toward polar residues. Composition is skewed to basic and acidic residues over residues 193-202 (KPREKSIVDD) and 216-226 (NIEKEEERKDD). Residues 205–239 (FKLSEMEAYLENIEKEEERKDDNDEEEEDIDFFED) are a coiled coil. Residues 227-247 (NDEEEEDIDFFEDIDSDEDEG) show a composition bias toward acidic residues. Position 242 is a phosphoserine (Ser-242). Positions 253 to 264 (KKLKSGKSSRNL) are enriched in basic residues. Phosphoserine is present on residues Ser-275 and Ser-289. Basic and acidic residues predominate over residues 280-290 (TNVHDDELDSN). Coiled coils occupy residues 284-324 (DDEL…NKQH) and 348-382 (NVKKNSDEVKSSFEKRQEKMNEKIASLEKELLEKK). The segment covering 291–318 (KEDDEIAEEEAEELSISETDEDDDLQEN) has biased composition (acidic residues). Residues 319-329 (EDNKQHKESLK) are compositionally biased toward basic and acidic residues. Lys-350 is covalently cross-linked (Glycyl lysine isopeptide (Lys-Gly) (interchain with G-Cter in SUMO2)). A compositionally biased stretch (basic and acidic residues) spans 351–364 (KNSDEVKSSFEKRQ). Glycyl lysine isopeptide (Lys-Gly) (interchain with G-Cter in SUMO2) cross-links involve residues Lys-382 and Lys-394. Positions 469-490 (LAEIYEQEYIKLNQQKTAEEEN) form a coiled coil. Lys-555 is covalently cross-linked (Glycyl lysine isopeptide (Lys-Gly) (interchain with G-Cter in SUMO2)). Basic and acidic residues predominate over residues 558–575 (NKAGDIKTAAEKTATDKK). The interval 558 to 606 (NKAGDIKTAAEKTATDKKRERRKKKYQKRMKIKEKEKRRKLLEKSSVDQ) is disordered. Residues 574–604 (KKRERRKKKYQKRMKIKEKEKRRKLLEKSSV) adopt a coiled-coil conformation. The segment covering 576–598 (RERRKKKYQKRMKIKEKEKRRKL) has biased composition (basic residues). Position 609 is an N6-acetyllysine (Lys-609). Residues Lys-632 and Lys-649 each participate in a glycyl lysine isopeptide (Lys-Gly) (interchain with G-Cter in SUMO2) cross-link. Positions 648–670 (SKLQDQVKMQINDAKKTEKKKKK) form a coiled coil. A disordered region spans residues 660 to 681 (DAKKTEKKKKKRQDISVHKLKL). Residues 672 to 681 (QDISVHKLKL) are compositionally biased toward basic and acidic residues.

This sequence belongs to the MPP10 family. In terms of assembly, part of the small subunit (SSU) processome, composed of more than 70 proteins and the RNA chaperone small nucleolar RNA (snoRNA) U3. Component of a heterotrimeric complex containing IMP3, IMP4 and MPHOSPH10. Interacts with IMP3 and IMP4. Post-translationally, phosphorylated in M (mitotic) phase.

The protein localises to the nucleus. It is found in the nucleolus. Its subcellular location is the chromosome. In terms of biological role, component of the 60-80S U3 small nucleolar ribonucleoprotein (U3 snoRNP). Required for the early cleavages during pre-18S ribosomal RNA processing. Part of the small subunit (SSU) processome, first precursor of the small eukaryotic ribosomal subunit. During the assembly of the SSU processome in the nucleolus, many ribosome biogenesis factors, an RNA chaperone and ribosomal proteins associate with the nascent pre-rRNA and work in concert to generate RNA folding, modifications, rearrangements and cleavage as well as targeted degradation of pre-ribosomal RNA by the RNA exosome. This is U3 small nucleolar ribonucleoprotein protein MPP10 from Homo sapiens (Human).